A 45-amino-acid chain; its full sequence is Thymosin beta-15A (45 aa).

2 stretches are compositionally biased toward basic and acidic residues: residues 1-27 (MSDK…EEKN) and 35-45 (IQQEKECVQTS). Residues 1–45 (MSDKPDLSEVEKFDRSKLKKTNTEEKNTLPSKETIQQEKECVQTS) are disordered.

Belongs to the thymosin beta family. As to expression, neuroblastoma-specific.

It localises to the cytoplasm. The protein resides in the cytoskeleton. Functionally, plays an important role in the organization of the cytoskeleton. Binds to and sequesters actin monomers (G actin) and therefore inhibits actin polymerization. The polypeptide is Thymosin beta-15A (TMSB15A) (Homo sapiens (Human)).